The primary structure comprises 482 residues: GTPase Der (482 aa).

EngA-type G domains lie at 3 to 166 (PVVA…SEQF) and 195 to 368 (IKLA…NSAT). GTP is bound by residues 9-16 (GRPNVGKS), 56-60 (DTGGI), 118-121 (NKVD), 201-208 (GKPNVGKS), 248-252 (DTAGV), and 313-316 (NKWD). In terms of domain architecture, KH-like spans 369–453 (KRINTSMLTR…PIKVEFREGA (85 aa)).

This sequence belongs to the TRAFAC class TrmE-Era-EngA-EngB-Septin-like GTPase superfamily. EngA (Der) GTPase family. As to quaternary structure, associates with the 50S ribosomal subunit.

In terms of biological role, GTPase that plays an essential role in the late steps of ribosome biogenesis. This Pseudoalteromonas atlantica (strain T6c / ATCC BAA-1087) protein is GTPase Der.